The primary structure comprises 225 residues: Cytidylate kinase (225 aa).

ATP is bound at residue 12–20 (GPSGAGKGT).

It belongs to the cytidylate kinase family. Type 1 subfamily.

It is found in the cytoplasm. It carries out the reaction CMP + ATP = CDP + ADP. It catalyses the reaction dCMP + ATP = dCDP + ADP. The protein is Cytidylate kinase of Proteus mirabilis (strain HI4320).